The primary structure comprises 212 residues: Ribonuclease HII (212 aa).

An RNase H type-2 domain is found at 20-209 (TCVVGVDEVG…VHNILYQEAS (190 aa)). Residues D26, E27, and D117 each contribute to the a divalent metal cation site.

Belongs to the RNase HII family. Requires Mn(2+) as cofactor. It depends on Mg(2+) as a cofactor.

It localises to the cytoplasm. It catalyses the reaction Endonucleolytic cleavage to 5'-phosphomonoester.. Functionally, endonuclease that specifically degrades the RNA of RNA-DNA hybrids. The polypeptide is Ribonuclease HII (Cereibacter sphaeroides (strain ATCC 17023 / DSM 158 / JCM 6121 / CCUG 31486 / LMG 2827 / NBRC 12203 / NCIMB 8253 / ATH 2.4.1.) (Rhodobacter sphaeroides)).